Here is a 465-residue protein sequence, read N- to C-terminus: UDP-N-acetylmuramate--L-alanine ligase (465 aa).

115 to 121 (GAHGKTT) provides a ligand contact to ATP.

Belongs to the MurCDEF family.

The protein resides in the cytoplasm. The catalysed reaction is UDP-N-acetyl-alpha-D-muramate + L-alanine + ATP = UDP-N-acetyl-alpha-D-muramoyl-L-alanine + ADP + phosphate + H(+). It participates in cell wall biogenesis; peptidoglycan biosynthesis. In terms of biological role, cell wall formation. The sequence is that of UDP-N-acetylmuramate--L-alanine ligase from Coxiella burnetii (strain CbuG_Q212) (Coxiella burnetii (strain Q212)).